The chain runs to 178 residues: MLEGIVRESIGRKAAKALKRDGYLIANIYGKGLENINAAFKINEFIKEVRKKTTLAFDVKVGGKVLNVVVVDYQKDPVTAELKHVDLKVAQKGVISKYMVPVKIVGTAMGLKNKGVLIQSKRRLKVKCAAENLPNYFELDVTKLDVGDALLVRDVVVPEGVTMVDADRVAVVGVEKAR.

It belongs to the bacterial ribosomal protein bL25 family. CTC subfamily. Part of the 50S ribosomal subunit; part of the 5S rRNA/L5/L18/L25 subcomplex. Contacts the 5S rRNA. Binds to the 5S rRNA independently of L5 and L18.

In terms of biological role, this is one of the proteins that binds to the 5S RNA in the ribosome where it forms part of the central protuberance. The sequence is that of Large ribosomal subunit protein bL25 from Campylobacter lari (strain RM2100 / D67 / ATCC BAA-1060).